The chain runs to 100 residues: UPF0213 protein FN1575 (100 aa).

The 77-residue stretch at 1 to 77 (MAYYLYMLRC…KYIKKKKENI (77 aa)) folds into the GIY-YIG domain.

It belongs to the UPF0213 family.

This is UPF0213 protein FN1575 from Fusobacterium nucleatum subsp. nucleatum (strain ATCC 25586 / DSM 15643 / BCRC 10681 / CIP 101130 / JCM 8532 / KCTC 2640 / LMG 13131 / VPI 4355).